Reading from the N-terminus, the 145-residue chain is Granulysin (145 aa).

The signal sequence occupies residues 1–22; that stretch reads MATWALLLLAAMLLGNPGLVFS. Residues 62–142 enclose the Saposin B-type domain; it reads LGRDYRTCLT…EDLRLCIPST (81 aa). 2 disulfides stabilise this stretch: C69–C132 and C96–C107.

Post-translationally, a 9 kDa form is produced by proteolytic processing of a 15 kDa protein. As to expression, expressed in natural killer and T-cells.

It is found in the secreted. In terms of biological role, antimicrobial protein that kills intracellular pathogens. Active against a broad range of microbes, including Gram-positive and Gram-negative bacteria, fungi, and parasites. Kills Mycobacterium tuberculosis. This is Granulysin (GNLY) from Homo sapiens (Human).